The primary structure comprises 362 residues: N5-carboxyaminoimidazole ribonucleotide synthase (362 aa).

Residues Arg-85, Lys-125, 130–136, 158–161, Glu-166, and 244–245 each bind ATP; these read GYDGRGQ, EKFI, and NE. One can recognise an ATP-grasp domain in the interval 89–274; sequence KSLLDELNLS…QFELHLRALL (186 aa).

The protein belongs to the PurK/PurT family. In terms of assembly, homodimer.

It carries out the reaction 5-amino-1-(5-phospho-beta-D-ribosyl)imidazole + hydrogencarbonate + ATP = 5-carboxyamino-1-(5-phospho-D-ribosyl)imidazole + ADP + phosphate + 2 H(+). Its pathway is purine metabolism; IMP biosynthesis via de novo pathway; 5-amino-1-(5-phospho-D-ribosyl)imidazole-4-carboxylate from 5-amino-1-(5-phospho-D-ribosyl)imidazole (N5-CAIR route): step 1/2. Functionally, catalyzes the ATP-dependent conversion of 5-aminoimidazole ribonucleotide (AIR) and HCO(3)(-) to N5-carboxyaminoimidazole ribonucleotide (N5-CAIR). The polypeptide is N5-carboxyaminoimidazole ribonucleotide synthase (Haemophilus influenzae (strain ATCC 51907 / DSM 11121 / KW20 / Rd)).